A 305-amino-acid chain; its full sequence is tRNA dimethylallyltransferase (305 aa).

ATP is bound at residue G11–T18. T13 to T18 contacts substrate. An interaction with substrate tRNA region spans residues D36 to Q39.

Belongs to the IPP transferase family. In terms of assembly, monomer. Requires Mg(2+) as cofactor.

It catalyses the reaction adenosine(37) in tRNA + dimethylallyl diphosphate = N(6)-dimethylallyladenosine(37) in tRNA + diphosphate. Functionally, catalyzes the transfer of a dimethylallyl group onto the adenine at position 37 in tRNAs that read codons beginning with uridine, leading to the formation of N6-(dimethylallyl)adenosine (i(6)A). The sequence is that of tRNA dimethylallyltransferase from Listeria monocytogenes serotype 4a (strain HCC23).